The primary structure comprises 391 residues: Methylthioribose-1-phosphate isomerase (391 aa).

The active-site Proton donor is the Asp-267.

This sequence belongs to the eIF-2B alpha/beta/delta subunits family. MtnA subfamily.

The protein localises to the cytoplasm. Its subcellular location is the nucleus. It carries out the reaction 5-(methylsulfanyl)-alpha-D-ribose 1-phosphate = 5-(methylsulfanyl)-D-ribulose 1-phosphate. It participates in amino-acid biosynthesis; L-methionine biosynthesis via salvage pathway; L-methionine from S-methyl-5-thio-alpha-D-ribose 1-phosphate: step 1/6. In terms of biological role, catalyzes the interconversion of methylthioribose-1-phosphate (MTR-1-P) into methylthioribulose-1-phosphate (MTRu-1-P). The sequence is that of Methylthioribose-1-phosphate isomerase from Ajellomyces capsulatus (strain NAm1 / WU24) (Darling's disease fungus).